The following is a 476-amino-acid chain: Eukaryotic translation initiation factor 3 subunit L (476 aa).

Positions 257 to 452 (DAIRMFSHIL…DLDYALEKDL (196 aa)) constitute a PCI domain.

The protein belongs to the eIF-3 subunit L family. Component of the eukaryotic translation initiation factor 3 (eIF-3) complex.

The protein localises to the cytoplasm. In terms of biological role, component of the eukaryotic translation initiation factor 3 (eIF-3) complex, which is involved in protein synthesis of a specialized repertoire of mRNAs and, together with other initiation factors, stimulates binding of mRNA and methionyl-tRNAi to the 40S ribosome. The eIF-3 complex specifically targets and initiates translation of a subset of mRNAs involved in cell proliferation. The sequence is that of Eukaryotic translation initiation factor 3 subunit L from Emericella nidulans (strain FGSC A4 / ATCC 38163 / CBS 112.46 / NRRL 194 / M139) (Aspergillus nidulans).